We begin with the raw amino-acid sequence, 793 residues long: Probable phosphoketolase (793 aa).

Belongs to the XFP family. Thiamine diphosphate serves as cofactor.

The protein is Probable phosphoketolase of Gloeobacter violaceus (strain ATCC 29082 / PCC 7421).